Here is a 1400-residue protein sequence, read N- to C-terminus: DNA-directed RNA polymerase subunit beta' (1400 aa).

Zn(2+) is bound by residues C70, C72, C85, and C88. Mg(2+)-binding residues include D460, D462, and D464. 4 residues coordinate Zn(2+): C814, C889, C896, and C899.

The protein belongs to the RNA polymerase beta' chain family. The RNAP catalytic core consists of 2 alpha, 1 beta, 1 beta' and 1 omega subunit. When a sigma factor is associated with the core the holoenzyme is formed, which can initiate transcription. It depends on Mg(2+) as a cofactor. Requires Zn(2+) as cofactor.

It carries out the reaction RNA(n) + a ribonucleoside 5'-triphosphate = RNA(n+1) + diphosphate. In terms of biological role, DNA-dependent RNA polymerase catalyzes the transcription of DNA into RNA using the four ribonucleoside triphosphates as substrates. This is DNA-directed RNA polymerase subunit beta' from Alcanivorax borkumensis (strain ATCC 700651 / DSM 11573 / NCIMB 13689 / SK2).